Reading from the N-terminus, the 265-residue chain is tRNA pseudouridine synthase A (265 aa).

The Nucleophile role is filled by Asp52. Residue Tyr105 participates in substrate binding.

This sequence belongs to the tRNA pseudouridine synthase TruA family.

The enzyme catalyses uridine(38/39/40) in tRNA = pseudouridine(38/39/40) in tRNA. In terms of biological role, formation of pseudouridine at positions 38, 39 and 40 in the anticodon stem and loop of transfer RNAs. This chain is tRNA pseudouridine synthase A, found in Archaeoglobus fulgidus (strain ATCC 49558 / DSM 4304 / JCM 9628 / NBRC 100126 / VC-16).